The sequence spans 257 residues: Imidazole glycerol phosphate synthase subunit HisF (257 aa).

Active-site residues include D11 and D130.

The protein belongs to the HisA/HisF family. As to quaternary structure, heterodimer of HisH and HisF.

It is found in the cytoplasm. It carries out the reaction 5-[(5-phospho-1-deoxy-D-ribulos-1-ylimino)methylamino]-1-(5-phospho-beta-D-ribosyl)imidazole-4-carboxamide + L-glutamine = D-erythro-1-(imidazol-4-yl)glycerol 3-phosphate + 5-amino-1-(5-phospho-beta-D-ribosyl)imidazole-4-carboxamide + L-glutamate + H(+). It participates in amino-acid biosynthesis; L-histidine biosynthesis; L-histidine from 5-phospho-alpha-D-ribose 1-diphosphate: step 5/9. Functionally, IGPS catalyzes the conversion of PRFAR and glutamine to IGP, AICAR and glutamate. The HisF subunit catalyzes the cyclization activity that produces IGP and AICAR from PRFAR using the ammonia provided by the HisH subunit. This chain is Imidazole glycerol phosphate synthase subunit HisF, found in Aliivibrio salmonicida (strain LFI1238) (Vibrio salmonicida (strain LFI1238)).